The primary structure comprises 184 residues: Mitochondrial translation release factor in rescue (184 aa).

A mitochondrion-targeting transit peptide spans 1–98; the sequence is MSSRSTWALL…HVPSGIVVKC (98 aa). Residues 60–124 are GGQ domain; the sequence is ESELEEQFVK…LQEKVDVFYN (65 aa). The GGQ motif lies at 74–76; that stretch reads GGQ. Gln-76 is subject to N5-methylglutamine. Residues 130–178 are a coiled coil; it reads VHKEKLEAERRKRERKKRAKETLEKKKLLKELREASQNITEKKADADGI. The interval 132 to 184 is disordered; it reads KEKLEAERRKRERKKRAKETLEKKKLLKELREASQNITEKKADADGIPRGFQE. The segment covering 149-184 has biased composition (basic and acidic residues); it reads KETLEKKKLLKELREASQNITEKKADADGIPRGFQE.

This sequence belongs to the prokaryotic/mitochondrial release factor family. In terms of assembly, interacts (via C-terminus) with MTRES1 (via S4 domain). Associates with mitoribosomal S39 large subunit, peptidyl tRNA and nascent chain. Methylation of glutamine in the GGQ triplet by HEMK1.

The protein resides in the mitochondrion. Its function is as follows. Part of a mitoribosome-associated quality control pathway that prevents aberrant translation by responding to interruptions during elongation. As heterodimer with MTRES1, ejects the unfinished nascent chain and peptidyl transfer RNA (tRNA), respectively, from stalled ribosomes. Recruitment of mitoribosome biogenesis factors to these quality control intermediates suggests additional roles for MTRES1 and MTRF during mitoribosome rescue. In Mus musculus (Mouse), this protein is Mitochondrial translation release factor in rescue.